The primary structure comprises 31 residues: Ranatuerin-2PL (31 aa).

A disulfide bridge links cysteine 23 with cysteine 29.

As to expression, expressed by the skin glands.

The protein resides in the secreted. Antimicrobial activity against Gram-negative bacterium E.coli. The chain is Ranatuerin-2PL from Lithobates palustris (Pickerel frog).